The chain runs to 217 residues: Somatotropin (217 aa).

A signal peptide spans 1–26 (MMAAGPRTSLLLAFALLCLPWTQVVG). His-46 contacts Zn(2+). Cys-79 and Cys-190 are disulfide-bonded. Ser-132 carries the phosphoserine modification. Residue Glu-199 participates in Zn(2+) binding. A disulfide bridge connects residues Cys-207 and Cys-215.

The protein belongs to the somatotropin/prolactin family.

The protein localises to the secreted. Functionally, plays an important role in growth control. Its major role in stimulating body growth is to stimulate the liver and other tissues to secrete IGF1. It stimulates both the differentiation and proliferation of myoblasts. It also stimulates amino acid uptake and protein synthesis in muscle and other tissues. The sequence is that of Somatotropin (GH1) from Bos mutus grunniens (Wild yak).